Here is a 249-residue protein sequence, read N- to C-terminus: ATP synthase subunit a (249 aa).

6 helical membrane passes run 30–50 (QSPLFMLIAAAVVLVFLYVGM), 86–106 (FFPFVFAIFFFILAGNYLGLL), 115–135 (HIAVTFGLAIMVFIISILASI), 146–166 (FLPAGTPVWLAPLLVPIEIIS), 191–211 (VFAGFTIMLAGLGAFGHVLAI), and 218–238 (IALTALELLVGVLQAYVFAIL).

The protein belongs to the ATPase A chain family. In terms of assembly, F-type ATPases have 2 components, CF(1) - the catalytic core - and CF(0) - the membrane proton channel. CF(1) has five subunits: alpha(3), beta(3), gamma(1), delta(1), epsilon(1). CF(0) has three main subunits: a(1), b(2) and c(9-12). The alpha and beta chains form an alternating ring which encloses part of the gamma chain. CF(1) is attached to CF(0) by a central stalk formed by the gamma and epsilon chains, while a peripheral stalk is formed by the delta and b chains.

Its subcellular location is the cell inner membrane. Its function is as follows. Key component of the proton channel; it plays a direct role in the translocation of protons across the membrane. This Gluconobacter oxydans (strain 621H) (Gluconobacter suboxydans) protein is ATP synthase subunit a.